The primary structure comprises 166 residues: Lipoprotein signal peptidase (166 aa).

The next 4 membrane-spanning stretches (helical) occupy residues 9-29 (AGGS…FDQL), 37-57 (VFAY…LVYN), 71-91 (WQRW…CYLL), and 100-120 (FCTA…DRLL). Residues D126 and D144 contribute to the active site. A helical membrane pass occupies residues 136–156 (HWPAFNLADSAITIGAALLVF).

It belongs to the peptidase A8 family.

It is found in the cell inner membrane. The catalysed reaction is Release of signal peptides from bacterial membrane prolipoproteins. Hydrolyzes -Xaa-Yaa-Zaa-|-(S,diacylglyceryl)Cys-, in which Xaa is hydrophobic (preferably Leu), and Yaa (Ala or Ser) and Zaa (Gly or Ala) have small, neutral side chains.. It functions in the pathway protein modification; lipoprotein biosynthesis (signal peptide cleavage). Functionally, this protein specifically catalyzes the removal of signal peptides from prolipoproteins. The sequence is that of Lipoprotein signal peptidase from Paraburkholderia phymatum (strain DSM 17167 / CIP 108236 / LMG 21445 / STM815) (Burkholderia phymatum).